Here is a 383-residue protein sequence, read N- to C-terminus: uncharacterized protein (383 aa).

10 consecutive transmembrane segments (helical) span residues 25–45 (LWVA…PAVA), 53–73 (IYNV…PIMV), 103–123 (FTMV…LLTA), 139–159 (IAGC…MWGY), 166–186 (GLTL…YAPL), 200–220 (WQTI…AGIY), 238–258 (FLHY…ILLF), 272–292 (IFLI…ITYV), 309–329 (LIGA…LFGL), and 332–352 (GAAL…LMLV).

It belongs to the arsenical resistance-3 (ACR3) (TC 2.A.59) family.

It is found in the cell membrane. This is an uncharacterized protein from Synechocystis sp. (strain ATCC 27184 / PCC 6803 / Kazusa).